Reading from the N-terminus, the 957-residue chain is Glycine dehydrogenase (decarboxylating) (957 aa).

Position 708 is an N6-(pyridoxal phosphate)lysine (lysine 708).

The protein belongs to the GcvP family. As to quaternary structure, the glycine cleavage system is composed of four proteins: P, T, L and H. It depends on pyridoxal 5'-phosphate as a cofactor.

The catalysed reaction is N(6)-[(R)-lipoyl]-L-lysyl-[glycine-cleavage complex H protein] + glycine + H(+) = N(6)-[(R)-S(8)-aminomethyldihydrolipoyl]-L-lysyl-[glycine-cleavage complex H protein] + CO2. In terms of biological role, the glycine cleavage system catalyzes the degradation of glycine. The P protein binds the alpha-amino group of glycine through its pyridoxal phosphate cofactor; CO(2) is released and the remaining methylamine moiety is then transferred to the lipoamide cofactor of the H protein. This chain is Glycine dehydrogenase (decarboxylating), found in Escherichia coli O6:H1 (strain CFT073 / ATCC 700928 / UPEC).